Reading from the N-terminus, the 113-residue chain is Putative membrane protein insertion efficiency factor (113 aa).

The protein belongs to the UPF0161 family.

Its subcellular location is the cell inner membrane. Functionally, could be involved in insertion of integral membrane proteins into the membrane. The polypeptide is Putative membrane protein insertion efficiency factor (Campylobacter jejuni subsp. jejuni serotype O:2 (strain ATCC 700819 / NCTC 11168)).